A 322-amino-acid chain; its full sequence is Lipoyl synthase (322 aa).

The segment covering 1 to 14 (MKTLDENQAPSRQT) has biased composition (polar residues). A disordered region spans residues 1 to 30 (MKTLDENQAPSRQTPESHRRGAEKLSRIPV). The span at 15 to 26 (PESHRRGAEKLS) shows a compositional bias: basic and acidic residues. [4Fe-4S] cluster-binding residues include C70, C75, C81, C96, C100, C103, and S310. The Radical SAM core domain occupies 82–299 (FGHGTATFMI…AGYARELGFA (218 aa)).

The protein belongs to the radical SAM superfamily. Lipoyl synthase family. [4Fe-4S] cluster is required as a cofactor.

It localises to the cytoplasm. The catalysed reaction is [[Fe-S] cluster scaffold protein carrying a second [4Fe-4S](2+) cluster] + N(6)-octanoyl-L-lysyl-[protein] + 2 oxidized [2Fe-2S]-[ferredoxin] + 2 S-adenosyl-L-methionine + 4 H(+) = [[Fe-S] cluster scaffold protein] + N(6)-[(R)-dihydrolipoyl]-L-lysyl-[protein] + 4 Fe(3+) + 2 hydrogen sulfide + 2 5'-deoxyadenosine + 2 L-methionine + 2 reduced [2Fe-2S]-[ferredoxin]. It functions in the pathway protein modification; protein lipoylation via endogenous pathway; protein N(6)-(lipoyl)lysine from octanoyl-[acyl-carrier-protein]: step 2/2. In terms of biological role, catalyzes the radical-mediated insertion of two sulfur atoms into the C-6 and C-8 positions of the octanoyl moiety bound to the lipoyl domains of lipoate-dependent enzymes, thereby converting the octanoylated domains into lipoylated derivatives. The polypeptide is Lipoyl synthase (Methylococcus capsulatus (strain ATCC 33009 / NCIMB 11132 / Bath)).